The following is a 673-amino-acid chain: DNA ligase (673 aa).

NAD(+) contacts are provided by residues 33–37 (DHQYD), 83–84 (SL), and glutamate 117. Lysine 119 functions as the N6-AMP-lysine intermediate in the catalytic mechanism. NAD(+) contacts are provided by arginine 140, glutamate 175, lysine 282, and lysine 306. Residues cysteine 400, cysteine 403, cysteine 418, and cysteine 424 each contribute to the Zn(2+) site. The region spanning 592 to 673 (RGSSAISGKT…WVKMVEDARS (82 aa)) is the BRCT domain.

Belongs to the NAD-dependent DNA ligase family. LigA subfamily. Requires Mg(2+) as cofactor. Mn(2+) is required as a cofactor.

It carries out the reaction NAD(+) + (deoxyribonucleotide)n-3'-hydroxyl + 5'-phospho-(deoxyribonucleotide)m = (deoxyribonucleotide)n+m + AMP + beta-nicotinamide D-nucleotide.. In terms of biological role, DNA ligase that catalyzes the formation of phosphodiester linkages between 5'-phosphoryl and 3'-hydroxyl groups in double-stranded DNA using NAD as a coenzyme and as the energy source for the reaction. It is essential for DNA replication and repair of damaged DNA. In Anaplasma marginale (strain Florida), this protein is DNA ligase.